The following is a 228-amino-acid chain: Vacuolar-sorting protein snf7 (228 aa).

Coiled coils occupy residues 25 to 94 (ILGL…QINA) and 125 to 226 (EKVD…QAEM).

It belongs to the SNF7 family. A component of the endosomal sorting required for transport complex III (ESCRT-III).

The protein resides in the cytoplasm. The protein localises to the endosome membrane. Its function is as follows. Required for the sorting and concentration of proteins resulting in the entry of these proteins into the invaginating vesicles of the multivesicular body (MVB). Also required for the proteolytic cleavage of the transcription factor pacc-1 in response to alkaline ambient pH. This is Vacuolar-sorting protein snf7 (vsp-3) from Neurospora crassa (strain ATCC 24698 / 74-OR23-1A / CBS 708.71 / DSM 1257 / FGSC 987).